Reading from the N-terminus, the 338-residue chain is Phosphate acyltransferase (338 aa).

Belongs to the PlsX family. As to quaternary structure, homodimer. Probably interacts with PlsY.

The protein localises to the cytoplasm. It carries out the reaction a fatty acyl-[ACP] + phosphate = an acyl phosphate + holo-[ACP]. Its pathway is lipid metabolism; phospholipid metabolism. Functionally, catalyzes the reversible formation of acyl-phosphate (acyl-PO(4)) from acyl-[acyl-carrier-protein] (acyl-ACP). This enzyme utilizes acyl-ACP as fatty acyl donor, but not acyl-CoA. In Mannheimia succiniciproducens (strain KCTC 0769BP / MBEL55E), this protein is Phosphate acyltransferase.